Consider the following 366-residue polypeptide: S-adenosylmethionine:tRNA ribosyltransferase-isomerase (366 aa).

It belongs to the QueA family. In terms of assembly, monomer.

It localises to the cytoplasm. It catalyses the reaction 7-aminomethyl-7-carbaguanosine(34) in tRNA + S-adenosyl-L-methionine = epoxyqueuosine(34) in tRNA + adenine + L-methionine + 2 H(+). It participates in tRNA modification; tRNA-queuosine biosynthesis. Transfers and isomerizes the ribose moiety from AdoMet to the 7-aminomethyl group of 7-deazaguanine (preQ1-tRNA) to give epoxyqueuosine (oQ-tRNA). This Synechococcus sp. (strain CC9605) protein is S-adenosylmethionine:tRNA ribosyltransferase-isomerase.